A 332-amino-acid chain; its full sequence is MNITTLTNSISTSSFSPNNTNGSSTETVNSDIKTTTSSHPVSSLTMLNDTLHNIRTTNQALKKELSQKTLTKTSLEEIALHSSQISMDVNKSAQLLNILSKTEYPINKDARELLHSAPKEAELDGYEMISHRELWAKIANSINDINEQYLKVYEHAVSSYTQMYQEFSAVLSSLAGWISPGGNDGNSVKLQVKSLKDALTTLKKNYEDKPLYPATNTVSEQEANKWLTELGGTIGTVSAKNGGYVVSINMTPIYNMLNRLDNLGGNGEVVLDNAKYQAWNAGFSAEDETMKNNLQTLVQKYSNANSIFDNLVKVLSSTISSCTDTDKLFLHF.

Low complexity predominate over residues 1 to 25; it reads MNITTLTNSISTSSFSPNNTNGSST. The interval 1 to 43 is disordered; the sequence is MNITTLTNSISTSSFSPNNTNGSSTETVNSDIKTTTSSHPVSS. A compositionally biased stretch (polar residues) spans 26-43; that stretch reads ETVNSDIKTTTSSHPVSS. Residues 44 to 77 adopt a coiled-coil conformation; the sequence is LTMLNDTLHNIRTTNQALKKELSQKTLTKTSLEE. The tract at residues 192–267 is ipaB binding; the sequence is VKSLKDALTT…NRLDNLGGNG (76 aa).

The protein belongs to the invasin protein D family.

It localises to the secreted. In terms of biological role, required for bacterial invasion of host cells. Controls IpaB and IpaC secretion, and the efficiency with which they are physically inserted into target cell membranes. These proteins are exported via T3SS to form a pore in the host membrane that allows the translocation of the other effectors into the host cytoplasm. Along with IpaB, is essential for both blocking secretion through the Mxi/Spa translocon in the absence of a secretion-inducing signal, and for controlling the level of secretion in the presence of this signal. This is Invasin IpaD (ipaD) from Shigella dysenteriae.